The following is a 108-amino-acid chain: UPF0060 membrane protein Nwi_1459 (108 aa).

The next 4 membrane-spanning stretches (helical) occupy residues 5 to 25, 31 to 51, 61 to 81, and 88 to 108; these read AAYVGAAIAEIAGCFAFWAWL, VWWLVPGMASLALFAYLLTLV, AAYGGIYIMASLGWLWSVEGI, and LAGALICLIGAVVILIGPHEI.

The protein belongs to the UPF0060 family.

The protein localises to the cell inner membrane. In Nitrobacter winogradskyi (strain ATCC 25391 / DSM 10237 / CIP 104748 / NCIMB 11846 / Nb-255), this protein is UPF0060 membrane protein Nwi_1459.